The sequence spans 547 residues: Vacuolar fusion protein MON1 homolog B (547 aa).

Met1 carries the post-translational modification N-acetylmethionine. The interval 1 to 106 (MEAGGDTAAP…GGDPSDEEWR (106 aa)) is disordered. A compositionally biased stretch (pro residues) spans 57-66 (PPSPSPPPQS). Ser59 and Ser61 each carry phosphoserine.

The protein belongs to the MON1/SAND family. In terms of assembly, interacts with CCNT2; down-regulates CCNT2-mediated activation of viral promoters during herpes simplex virus 1/HHV-1 infection. Found in a complex with RMC1, CCZ1 MON1A and MON1B.

The sequence is that of Vacuolar fusion protein MON1 homolog B (MON1B) from Macaca fascicularis (Crab-eating macaque).